The primary structure comprises 227 residues: DNA repair protein RecO (227 aa).

It belongs to the RecO family.

Involved in DNA repair and RecF pathway recombination. This Pseudomonas entomophila (strain L48) protein is DNA repair protein RecO.